Here is a 299-residue protein sequence, read N- to C-terminus: Coenzyme PQQ synthesis protein B (299 aa).

Belongs to the PqqB family.

The protein operates within cofactor biosynthesis; pyrroloquinoline quinone biosynthesis. Functionally, may be involved in the transport of PQQ or its precursor to the periplasm. This chain is Coenzyme PQQ synthesis protein B, found in Methylorubrum extorquens (strain PA1) (Methylobacterium extorquens).